Consider the following 146-residue polypeptide: Large ribosomal subunit protein uL15 (146 aa).

A compositionally biased stretch (basic and acidic residues) spans 1–13; the sequence is MKLHELKPAEGSR. The interval 1-57 is disordered; that stretch reads MKLHELKPAEGSRKVRNRVGRGTSSGNGKTSGRGQKGQKARSGVGLRPGFEGGQTPL. A compositionally biased stretch (gly residues) spans 23–35; it reads TSSGNGKTSGRGQ.

It belongs to the universal ribosomal protein uL15 family. As to quaternary structure, part of the 50S ribosomal subunit.

Binds to the 23S rRNA. This is Large ribosomal subunit protein uL15 from Streptococcus thermophilus (strain ATCC BAA-491 / LMD-9).